The chain runs to 141 residues: Large-conductance mechanosensitive channel (141 aa).

3 helical membrane passes run 16 to 36 (VIDLAVGVIIGAAFGKIVDSV), 40 to 60 (LIMPLVGRVIGKLDFSSMFIV), and 86 to 106 (GNFLTIVVNFLILAFIIFLMV).

The protein belongs to the MscL family. Homopentamer.

It is found in the cell inner membrane. Functionally, channel that opens in response to stretch forces in the membrane lipid bilayer. May participate in the regulation of osmotic pressure changes within the cell. This is Large-conductance mechanosensitive channel from Cupriavidus necator (strain ATCC 17699 / DSM 428 / KCTC 22496 / NCIMB 10442 / H16 / Stanier 337) (Ralstonia eutropha).